Consider the following 97-residue polypeptide: Putative mitochondrial import inner membrane translocase subunit Tim8 A-B (97 aa).

The Twin CX3C motif motif lies at 43-66 (CWEKCMDKPGPRLDGRAELCLVNC). 2 cysteine pairs are disulfide-bonded: cysteine 43–cysteine 66 and cysteine 47–cysteine 62.

It belongs to the small Tim family. As to quaternary structure, heterohexamer; possibly composed of 3 copies of TIMM8AB and 3 copies of TIMM13.

The protein resides in the mitochondrion inner membrane. In terms of biological role, putative mitochondrial intermembrane chaperone that participates in the import and insertion of some multi-pass transmembrane proteins into the mitochondrial inner membrane. Also required for the transfer of beta-barrel precursors from the TOM complex to the sorting and assembly machinery (SAM complex) of the outer membrane. Acts as a chaperone-like protein that protects the hydrophobic precursors from aggregation and guide them through the mitochondrial intermembrane space. This Mus musculus (Mouse) protein is Putative mitochondrial import inner membrane translocase subunit Tim8 A-B (Timm8a2).